The primary structure comprises 283 residues: uncharacterized protein (283 aa).

A compositionally biased stretch (polar residues) spans 1–10; it reads MELNKTSESL. 2 disordered regions span residues 1–99 and 255–283; these read MELN…NPTS and DQEG…EAHI. Basic and acidic residues-rich tracts occupy residues 14-34, 42-53, and 61-71; these read KIDH…REVR, SSTRQEKADRMP, and ESSKGSEEGAV.

It belongs to the chlamydial CPn_0705/CT_671/TC_0042 family.

This is an uncharacterized protein from Chlamydia trachomatis serovar D (strain ATCC VR-885 / DSM 19411 / UW-3/Cx).